Reading from the N-terminus, the 264-residue chain is 3-methyl-2-oxobutanoate hydroxymethyltransferase (264 aa).

Mg(2+) is bound by residues Asp45 and Asp84. Residues 45-46, Asp84, and Lys112 contribute to the 3-methyl-2-oxobutanoate site; that span reads DS. Glu114 is a Mg(2+) binding site. Catalysis depends on Glu181, which acts as the Proton acceptor.

It belongs to the PanB family. As to quaternary structure, homodecamer; pentamer of dimers. Mg(2+) serves as cofactor.

The protein localises to the cytoplasm. The enzyme catalyses 3-methyl-2-oxobutanoate + (6R)-5,10-methylene-5,6,7,8-tetrahydrofolate + H2O = 2-dehydropantoate + (6S)-5,6,7,8-tetrahydrofolate. The protein operates within cofactor biosynthesis; (R)-pantothenate biosynthesis; (R)-pantoate from 3-methyl-2-oxobutanoate: step 1/2. Functionally, catalyzes the reversible reaction in which hydroxymethyl group from 5,10-methylenetetrahydrofolate is transferred onto alpha-ketoisovalerate to form ketopantoate. This is 3-methyl-2-oxobutanoate hydroxymethyltransferase from Escherichia coli O17:K52:H18 (strain UMN026 / ExPEC).